Consider the following 272-residue polypeptide: Tropinone reductase-like 1 (272 aa).

17–41 (IITGGASGIGACTAELFHENGAKVV) lines the NAD(+) pocket. A substrate-binding site is contributed by Ser-150. The Proton acceptor role is filled by Tyr-163.

Belongs to the short-chain dehydrogenases/reductases (SDR) family.

Has no tropinone reductase activity. This Erythroxylum coca (Coca plant) protein is Tropinone reductase-like 1.